We begin with the raw amino-acid sequence, 382 residues long: Guanine nucleotide exchange factor for Rab-3A (382 aa).

Pro residues predominate over residues 1 to 17; that stretch reads MWSGPPQPDQGLPPPLA. The tract at residues 1-60 is disordered; it reads MWSGPPQPDQGLPPPLAAVPVPWKSTDPCQGHRESPGALVETSAGEEAQGQEGPAAAQLD. A compositionally biased stretch (low complexity) spans 45–58; sequence GEEAQGQEGPAAAQ. A coiled-coil region spans residues 73–161; sequence EKGSEFLKEE…AEVTALKTLV (89 aa). The tract at residues 166 to 198 is disordered; sequence PASPNRELHPQLLSPTKAGPRKGHSRHKSTSST. Residues Ser-168 and Ser-179 each carry the phosphoserine modification. A compositionally biased stretch (basic residues) spans 184 to 194; the sequence is GPRKGHSRHKS.

The protein belongs to the SEC2 family. In terms of assembly, interacts with RAB3A and IHPK1 through the coiled-coil domain. This interaction is competitive. IHPK1 kinase activity is not required for this interaction.

Its function is as follows. Guanine nucleotide exchange factor (GEF) which may activate RAB3A, a GTPase that regulates synaptic vesicle exocytosis. Promotes the exchange of GDP to GTP, converting inactive GDP-bound Rab proteins into their active GTP-bound form. May also activate RAB8A and RAB8B. The sequence is that of Guanine nucleotide exchange factor for Rab-3A (RAB3IL1) from Homo sapiens (Human).